The chain runs to 521 residues: MGLGKKLSVAVAASFMSLTISLPGVQAAENPQLKENLTNFVPKHSLVQSELPSVSDKAIKQYLKQNGKVFKGNPSERLKLIDQTTDDLGYKHFRYVPVVNGVPVKDSQVIIHVDKSNNVYAINGELNNDVSAKTANSKKLSANQALDHAYKAIGKSPEAVSNGTVANKNKAELKAAATKDGKYRLAYDVTIRYIEPEPANWEVTVDAETGKILKKQNKVEHAATTGTGTTLKGKTVSLNISSESGKYVLRDLSKPTGTQIITYDLQNREYNLPGTLVSSTTNQFTTSSQRAAVDAHYNLGKVYDYFYQKFNRNSYDNKGGKIVSSVHYGSRYNNAAWIGDQMIYGDGDGSFFSPLSGSMDVTAHEMTHGVTQETANLNYENQPGALNESFSDVFGYFNDTEDWDIGEDITVSQPALRSLSNPTKYGQPDNFKNYKNLPNTDAGDYGGVHTNSGIPNKAAYNTITKIGVNKAEQIYYRALTVYLTPSSTFKDAKAALIQSARDLYGSQDAASVEAAWNAVGL.

An N-terminal signal peptide occupies residues 1 to 27; the sequence is MGLGKKLSVAVAASFMSLTISLPGVQA. Positions 28-221 are cleaved as a propeptide — activation peptide; sequence AENPQLKENL…ILKKQNKVEH (194 aa). Residues glutamine 283 and aspartate 360 each contribute to the Ca(2+) site. Histidine 364 is a Zn(2+) binding site. Residue glutamate 365 is part of the active site. The Zn(2+) site is built by histidine 368 and glutamate 388. Ca(2+)-binding residues include aspartate 399, aspartate 402, aspartate 404, glutamate 407, and valine 411. Histidine 449 acts as the Proton donor in catalysis.

Belongs to the peptidase M4 family. Requires Ca(2+) as cofactor. Zn(2+) serves as cofactor.

Its subcellular location is the secreted. It carries out the reaction Similar, but not identical, to that of thermolysin.. In terms of biological role, extracellular zinc metalloprotease. In Bacillus amyloliquefaciens (Bacillus velezensis), this protein is Bacillolysin (npr).